Reading from the N-terminus, the 1307-residue chain is Light-sensor Protein kinase (1307 aa).

One can recognise a GAF domain in the interval 215–394 (DIELLCDTIV…VFGMQLNLHV (180 aa)). Position 320 (Cys-320) interacts with phytochromobilin. Positions 609–680 (LANEMSRVLE…RLLSLALQGE (72 aa)) constitute a PAS domain. One can recognise a PAC domain in the interval 683–739 (QNVEIKLKTFGTQTTERAVILIVNACCSRDASDFVVGVFFVGQDVTEQRMFMDRFTR). A hinge region spans residues 779–1003 (DHATGSVERL…WSFSEKFFQW (225 aa)). In terms of domain architecture, Protein kinase spans 1004–1307 (IQITGSLGSG…DSYPSTEEPS (304 aa)). ATP contacts are provided by residues 1010–1018 (LGSGSSATV) and Lys-1031. The active site involves Asp-1127.

The protein in the N-terminal section; belongs to the phytochrome family. It in the C-terminal section; belongs to the protein kinase superfamily. Ser/Thr protein kinase family. In terms of assembly, homodimer. Post-translationally, contains one covalently linked phytochromobilin chromophore.

The protein localises to the cell membrane. The catalysed reaction is L-seryl-[protein] + ATP = O-phospho-L-seryl-[protein] + ADP + H(+). It catalyses the reaction L-threonyl-[protein] + ATP = O-phospho-L-threonyl-[protein] + ADP + H(+). Regulatory photoreceptor which exists in two forms that are reversibly interconvertible by light: the Pr form that absorbs maximally in the red region of the spectrum and the Pfr form that absorbs maximally in the far-red region. Photoconversion of Pr to Pfr induces an array of morphogenic responses, whereas reconversion of Pfr to Pr cancels the induction of those responses. Pfr controls the expression of a number of nuclear genes including those encoding the small subunit of ribulose-bisphosphate carboxylase, chlorophyll A/B binding protein, protochlorophyllide reductase, rRNA, etc. It also controls the expression of its own gene(s) in a negative feedback fashion. The protein is Light-sensor Protein kinase (PHY1) of Ceratodon purpureus (Fire moss).